The sequence spans 1464 residues: Sister chromatid cohesion protein PDS5 homolog B-B (1464 aa).

One copy of the HEAT repeat lies at Leu383–Tyr419. Residues Lys1126 to Leu1464 are disordered. A compositionally biased stretch (polar residues) spans Pro1137–Val1155. Over residues Ser1156 to Gly1168 the composition is skewed to low complexity. Residues Thr1177 to Asp1186 show a composition bias toward acidic residues. Composition is skewed to basic and acidic residues over residues Lys1197–Pro1215, Glu1234–Ser1244, and Trp1265–Leu1274. Residues Lys1286–Lys1295 are compositionally biased toward basic residues. The segment at residues Lys1287–Met1299 is a DNA-binding region (a.T hook 1). Over residues Pro1325 to Asn1342 the composition is skewed to acidic residues. Residues Arg1347–Pro1357 are compositionally biased toward basic residues. Residues Lys1359–Thr1373 are compositionally biased toward polar residues. 2 DNA-binding regions (a.T hook) span residues Gln1375–Val1387 and Lys1391–Lys1403. Over residues Lys1390 to Val1400 the composition is skewed to basic residues. Over residues Ser1425 to Val1435 the composition is skewed to acidic residues. The span at Gly1441–Gln1453 shows a compositional bias: basic residues. Positions Met1455–Leu1464 are enriched in basic and acidic residues.

The protein belongs to the PDS5 family. Interacts with the cohesin complex. In terms of processing, phosphorylated in mitotic cells.

It is found in the nucleus. Plays a role in androgen-induced proliferative arrest. Required for maintenance of sister chromatid cohesion during mitosis. In Xenopus laevis (African clawed frog), this protein is Sister chromatid cohesion protein PDS5 homolog B-B (pds5b-b).